The sequence spans 310 residues: Glutarate 2-hydroxylase (310 aa).

Positions 160, 162, and 277 each coordinate Fe cation.

Belongs to the glutarate hydroxylase family. As to quaternary structure, homotetramer. Fe(2+) is required as a cofactor.

It carries out the reaction glutarate + 2-oxoglutarate + O2 = (S)-2-hydroxyglutarate + succinate + CO2. Its pathway is amino-acid degradation. In terms of biological role, acts as an alpha-ketoglutarate-dependent dioxygenase catalyzing hydroxylation of glutarate (GA) to L-2-hydroxyglutarate (L2HG). Functions in a L-lysine degradation pathway that proceeds via cadaverine, glutarate and L-2-hydroxyglutarate. In Shigella flexneri, this protein is Glutarate 2-hydroxylase.